A 473-amino-acid polypeptide reads, in one-letter code: MKILYSLRRFYHVETLFNGTFVLAGRDQETTGFAWWAGNARLINLSGKLLGAHVAHAGLIVFWAGAMNLFEVAHFVPEKPMYEQGLILLPHLATLGWGVGPGGEVLDTFPYFVSGVLHLISSAVLGFGGIYHALLGPETLEESFPFFGYVWKDRNKMTTILGIHLILLGIGAFLLVLKALYFGGIYDTWAPGGGDVRKITNLTLSPGVIFGYLLKSPFGGEGWIVSVDDLEDIIGGHVWLGFICVFGGIWHILTKPFAWARRAFVWSGEAYLSYSLGALSVFGFIACCFVWFNNTAYPSEFYGPTGPEASQAQAFTFLVRDQRLGANVGSAQGPTGLGKYLMRSPTGEVIFGGETMRFWDLRAPWLEPLRGPNGLDLSRLKKDIQPWQERRSAEYMTHAPLGSLNSVGGVATEINAVNYVSPRSWLATSHFVLGFFFFVGHLWHAGRARAAAAGFEKGIDRDLEPVLYMTPLN.

Positions 1–14 (MKILYSLRRFYHVE) are excised as a propeptide. An N-acetylthreonine modification is found at threonine 15. Threonine 15 is subject to Phosphothreonine. A run of 5 helical transmembrane segments spans residues 69 to 93 (LFEVAHFVPEKPMYEQGLILLPHLA), 134 to 155 (LLGPETLEESFPFFGYVWKDRN), 178 to 200 (KALYFGGIYDTWAPGGGDVRKIT), 255 to 275 (KPFAWARRAFVWSGEAYLSYS), and 291 to 312 (WFNNTAYPSEFYGPTGPEASQA). Glutamate 367 contributes to the [CaMn4O5] cluster binding site. Residues 447–471 (RARAAAAGFEKGIDRDLEPVLYMTP) form a helical membrane-spanning segment.

The protein belongs to the PsbB/PsbC family. PsbC subfamily. In terms of assembly, PSII is composed of 1 copy each of membrane proteins PsbA, PsbB, PsbC, PsbD, PsbE, PsbF, PsbH, PsbI, PsbJ, PsbK, PsbL, PsbM, PsbT, PsbX, PsbY, PsbZ, Psb30/Ycf12, at least 3 peripheral proteins of the oxygen-evolving complex and a large number of cofactors. It forms dimeric complexes. Binds multiple chlorophylls and provides some of the ligands for the Ca-4Mn-5O cluster of the oxygen-evolving complex. It may also provide a ligand for a Cl- that is required for oxygen evolution. PSII binds additional chlorophylls, carotenoids and specific lipids. serves as cofactor.

Its subcellular location is the plastid. The protein localises to the chloroplast thylakoid membrane. Its function is as follows. One of the components of the core complex of photosystem II (PSII). It binds chlorophyll and helps catalyze the primary light-induced photochemical processes of PSII. PSII is a light-driven water:plastoquinone oxidoreductase, using light energy to abstract electrons from H(2)O, generating O(2) and a proton gradient subsequently used for ATP formation. This is Photosystem II CP43 reaction center protein from Oryza nivara (Indian wild rice).